A 393-amino-acid polypeptide reads, in one-letter code: Squamosa promoter-binding-like protein 11 (393 aa).

Positions 74–96 are disordered; that stretch reads QSTSINSSSPEAKRCKLASESSP. The segment at 172-249 adopts an SBP-type zinc-finger fold; the sequence is VPRCQIDGCE…SHHNARRRKP (78 aa). The Zn(2+) site is built by cysteine 175, cysteine 180, cysteine 197, histidine 200, cysteine 216, cysteine 219, histidine 223, and cysteine 235. A Bipartite nuclear localization signal motif is present at residues 232-248; that stretch reads KRSCRKRLSHHNARRRK.

The cofactor is Zn(2+).

It localises to the nucleus. Its function is as follows. Trans-acting factor that binds specifically to the consensus nucleotide sequence 5'-TNCGTACAA-3'. This is Squamosa promoter-binding-like protein 11 (SPL11) from Arabidopsis thaliana (Mouse-ear cress).